Reading from the N-terminus, the 389-residue chain is S-adenosylmethionine synthase (389 aa).

His-17 provides a ligand contact to ATP. Asp-19 provides a ligand contact to Mg(2+). Glu-45 is a K(+) binding site. 2 residues coordinate L-methionine: Glu-58 and Gln-102. A flexible loop region spans residues 102–112 (QSADIAQGVDA). ATP contacts are provided by residues 167–169 (DAK), Asp-241, 247–248 (RK), Ala-264, and Lys-268. Asp-241 serves as a coordination point for L-methionine. Lys-272 contributes to the L-methionine binding site.

Belongs to the AdoMet synthase family. Homotetramer; dimer of dimers. Mg(2+) serves as cofactor. The cofactor is K(+).

It localises to the cytoplasm. It carries out the reaction L-methionine + ATP + H2O = S-adenosyl-L-methionine + phosphate + diphosphate. It participates in amino-acid biosynthesis; S-adenosyl-L-methionine biosynthesis; S-adenosyl-L-methionine from L-methionine: step 1/1. In terms of biological role, catalyzes the formation of S-adenosylmethionine (AdoMet) from methionine and ATP. The overall synthetic reaction is composed of two sequential steps, AdoMet formation and the subsequent tripolyphosphate hydrolysis which occurs prior to release of AdoMet from the enzyme. The protein is S-adenosylmethionine synthase of Parvibaculum lavamentivorans (strain DS-1 / DSM 13023 / NCIMB 13966).